The chain runs to 238 residues: Aspartate/glutamate leucyltransferase (238 aa).

Belongs to the R-transferase family. Bpt subfamily.

It localises to the cytoplasm. The enzyme catalyses N-terminal L-glutamyl-[protein] + L-leucyl-tRNA(Leu) = N-terminal L-leucyl-L-glutamyl-[protein] + tRNA(Leu) + H(+). It catalyses the reaction N-terminal L-aspartyl-[protein] + L-leucyl-tRNA(Leu) = N-terminal L-leucyl-L-aspartyl-[protein] + tRNA(Leu) + H(+). In terms of biological role, functions in the N-end rule pathway of protein degradation where it conjugates Leu from its aminoacyl-tRNA to the N-termini of proteins containing an N-terminal aspartate or glutamate. In Aeromonas hydrophila subsp. hydrophila (strain ATCC 7966 / DSM 30187 / BCRC 13018 / CCUG 14551 / JCM 1027 / KCTC 2358 / NCIMB 9240 / NCTC 8049), this protein is Aspartate/glutamate leucyltransferase.